The primary structure comprises 742 residues: Catalase-peroxidase (742 aa).

The disordered stretch occupies residues Met-1–Asn-43. Over residues Gly-11–Glu-20 the composition is skewed to polar residues. The tryptophyl-tyrosyl-methioninium (Trp-Tyr) (with M-257) cross-link spans Trp-109–Tyr-231. His-110 functions as the Proton acceptor in the catalytic mechanism. Residues Tyr-231–Met-257 constitute a cross-link (tryptophyl-tyrosyl-methioninium (Tyr-Met) (with W-109)). His-272 is a binding site for heme b.

This sequence belongs to the peroxidase family. Peroxidase/catalase subfamily. As to quaternary structure, homodimer or homotetramer. Heme b is required as a cofactor. In terms of processing, formation of the three residue Trp-Tyr-Met cross-link is important for the catalase, but not the peroxidase activity of the enzyme.

The catalysed reaction is H2O2 + AH2 = A + 2 H2O. It carries out the reaction 2 H2O2 = O2 + 2 H2O. Bifunctional enzyme with both catalase and broad-spectrum peroxidase activity. The polypeptide is Catalase-peroxidase (Rhodococcus jostii (strain RHA1)).